Reading from the N-terminus, the 272-residue chain is ATP phosphoribosyltransferase regulatory subunit (272 aa).

It belongs to the class-II aminoacyl-tRNA synthetase family. HisZ subfamily. In terms of assembly, heteromultimer composed of HisG and HisZ subunits.

It is found in the cytoplasm. It functions in the pathway amino-acid biosynthesis; L-histidine biosynthesis; L-histidine from 5-phospho-alpha-D-ribose 1-diphosphate: step 1/9. Its function is as follows. Required for the first step of histidine biosynthesis. May allow the feedback regulation of ATP phosphoribosyltransferase activity by histidine. This is ATP phosphoribosyltransferase regulatory subunit from Staphylococcus aureus (strain MRSA252).